Reading from the N-terminus, the 462-residue chain is MTSKSSSWKALLKNWEFKVAAFIGIYFLISHVVLETTDVVNEKGLKSHLKVLPEEVIDYYGKQPFSNVDKYAYMQYATNYDYLNLAIINFIHLRKANTKIPNLVIIYDEVLHYYASDKWSELYQVANQYKITLKAAPLIKASYQDDSNWAASFTKFHIFNQVEYDRIVFFDSDSMLVDIPNEIDFDNMESRFNHIDELFKIPQELSFASPQAYWLNNVVEGKSPRPRKNVEIPNKKRYSLRMKKLVNDLSIYQDFNLLPSLIYENHYFDNANHFFANHIMVITPSKNTFQELMRYIHNPWWWSITNRGSLRKPNDYDMEILNKYLNNELQRKRINVGILPHRVYGVLTGEFGEEWHERFVVEPQYLPFINKKSNKGWSPLEFFKKIKVVHFSDSPIPKPWEEENNEEHYNIKKIYCDKGDMEKFHKDYPVYKPRLTDDCDSVSIWNWFREQFYKERSGYWFA.

Topologically, residues 1-18 (MTSKSSSWKALLKNWEFK) are cytoplasmic. A helical; Signal-anchor for type II membrane protein transmembrane segment spans residues 19 to 35 (VAAFIGIYFLISHVVLE). The Lumenal portion of the chain corresponds to 36-462 (TTDVVNEKGL…YKERSGYWFA (427 aa)). The DXD motif lies at 171–173 (DSD).

Belongs to the GNT1 family.

It is found in the golgi apparatus membrane. The protein resides in the vacuole membrane. Its function is as follows. N-acetylglucosaminyltransferase involved in the Golgi-specific modification of N-linked glycans. The protein is Glucose N-acetyltransferase 1 (GNT1) of Candida albicans (strain SC5314 / ATCC MYA-2876) (Yeast).